The sequence spans 343 residues: Probable dual-specificity RNA methyltransferase RlmN (343 aa).

Catalysis depends on Glu91, which acts as the Proton acceptor. In terms of domain architecture, Radical SAM core spans 97–326 (HPGRITACIS…AEIRQEKGSD (230 aa)). A disulfide bond links Cys104 and Cys331. Residues Cys111, Cys115, and Cys118 each contribute to the [4Fe-4S] cluster site. S-adenosyl-L-methionine is bound by residues 158–159 (GE), Ser190, 213–215 (SLH), and Asn289. Cys331 functions as the S-methylcysteine intermediate in the catalytic mechanism.

It belongs to the radical SAM superfamily. RlmN family. Requires [4Fe-4S] cluster as cofactor.

The protein localises to the cytoplasm. It carries out the reaction adenosine(2503) in 23S rRNA + 2 reduced [2Fe-2S]-[ferredoxin] + 2 S-adenosyl-L-methionine = 2-methyladenosine(2503) in 23S rRNA + 5'-deoxyadenosine + L-methionine + 2 oxidized [2Fe-2S]-[ferredoxin] + S-adenosyl-L-homocysteine. The enzyme catalyses adenosine(37) in tRNA + 2 reduced [2Fe-2S]-[ferredoxin] + 2 S-adenosyl-L-methionine = 2-methyladenosine(37) in tRNA + 5'-deoxyadenosine + L-methionine + 2 oxidized [2Fe-2S]-[ferredoxin] + S-adenosyl-L-homocysteine. Functionally, specifically methylates position 2 of adenine 2503 in 23S rRNA and position 2 of adenine 37 in tRNAs. This chain is Probable dual-specificity RNA methyltransferase RlmN, found in Thermotoga neapolitana (strain ATCC 49049 / DSM 4359 / NBRC 107923 / NS-E).